The following is a 284-amino-acid chain: 4-diphosphocytidyl-2-C-methyl-D-erythritol kinase (284 aa).

Residue Lys-14 is part of the active site. 97 to 107 (PMGGGVGGGSS) contributes to the ATP binding site. Asp-139 is an active-site residue.

This sequence belongs to the GHMP kinase family. IspE subfamily.

The catalysed reaction is 4-CDP-2-C-methyl-D-erythritol + ATP = 4-CDP-2-C-methyl-D-erythritol 2-phosphate + ADP + H(+). Its pathway is isoprenoid biosynthesis; isopentenyl diphosphate biosynthesis via DXP pathway; isopentenyl diphosphate from 1-deoxy-D-xylulose 5-phosphate: step 3/6. Catalyzes the phosphorylation of the position 2 hydroxy group of 4-diphosphocytidyl-2C-methyl-D-erythritol. The sequence is that of 4-diphosphocytidyl-2-C-methyl-D-erythritol kinase from Pseudoalteromonas translucida (strain TAC 125).